The primary structure comprises 187 residues: ATP synthase subunit b 2 (187 aa).

Residues 1–12 (MAQERAEHESAD) show a composition bias toward basic and acidic residues. A disordered region spans residues 1 to 31 (MAQERAEHESADQHTTSTGVPHEGQGEPFPP). The helical transmembrane segment at 40-60 (LLIWLAISFLLLYALMSKLVL) threads the bilayer.

Belongs to the ATPase B chain family. As to quaternary structure, F-type ATPases have 2 components, F(1) - the catalytic core - and F(0) - the membrane proton channel. F(1) has five subunits: alpha(3), beta(3), gamma(1), delta(1), epsilon(1). F(0) has three main subunits: a(1), b(2) and c(10-14). The alpha and beta chains form an alternating ring which encloses part of the gamma chain. F(1) is attached to F(0) by a central stalk formed by the gamma and epsilon chains, while a peripheral stalk is formed by the delta and b chains.

The protein resides in the cell inner membrane. Its function is as follows. F(1)F(0) ATP synthase produces ATP from ADP in the presence of a proton or sodium gradient. F-type ATPases consist of two structural domains, F(1) containing the extramembraneous catalytic core and F(0) containing the membrane proton channel, linked together by a central stalk and a peripheral stalk. During catalysis, ATP synthesis in the catalytic domain of F(1) is coupled via a rotary mechanism of the central stalk subunits to proton translocation. Component of the F(0) channel, it forms part of the peripheral stalk, linking F(1) to F(0). The b'-subunit is a diverged and duplicated form of b found in plants and photosynthetic bacteria. This is ATP synthase subunit b 2 (atpF2) from Beijerinckia indica subsp. indica (strain ATCC 9039 / DSM 1715 / NCIMB 8712).